The chain runs to 330 residues: tRNA N6-adenosine threonylcarbamoyltransferase (330 aa).

Positions 110 and 114 each coordinate Fe cation. Residues Met-133–Gly-137, Asp-166, Gly-179, Asp-183, and Asn-271 contribute to the substrate site. Asp-299 contributes to the Fe cation binding site.

This sequence belongs to the KAE1 / TsaD family. Requires Fe(2+) as cofactor.

The protein resides in the cytoplasm. The catalysed reaction is L-threonylcarbamoyladenylate + adenosine(37) in tRNA = N(6)-L-threonylcarbamoyladenosine(37) in tRNA + AMP + H(+). Required for the formation of a threonylcarbamoyl group on adenosine at position 37 (t(6)A37) in tRNAs that read codons beginning with adenine. Is involved in the transfer of the threonylcarbamoyl moiety of threonylcarbamoyl-AMP (TC-AMP) to the N6 group of A37, together with TsaE and TsaB. TsaD likely plays a direct catalytic role in this reaction. The sequence is that of tRNA N6-adenosine threonylcarbamoyltransferase from Thermosipho africanus (strain TCF52B).